We begin with the raw amino-acid sequence, 196 residues long: MSSGNILWGSQNPIVFKNSFGVSNADTGSQDDLSQQNPFAEGYGVLLILLMVIQAIANNKFIEVQKNAERARNTQEKSNEMDEVIAKAAKGDAKTKEEVPEDVIKYMRDNGILIDGMTIDDYMAKYGDHGKLDKGGLQAIKAALDNDANRNTDLMSQGQITIQKMSQELNAVLTQLTGLISKWGEISSMIAQKTYS.

This sequence belongs to the EspA/SseB family. In terms of assembly, may form a complex with SseC and SseD. Binds to the chaperone SseA.

Its subcellular location is the secreted. The protein resides in the cell surface. In terms of biological role, effector proteins function to alter host cell physiology and promote bacterial survival in host tissues. May act as a translocator that mediates translocation of SPI-2 T3SS effector proteins from intraphagosomal bacterial cells into the host cells. SseB is required for correct localization of SseC and SseD on the bacterial cell surface. The protein is Secreted effector protein SseB (sseB) of Salmonella typhimurium (strain LT2 / SGSC1412 / ATCC 700720).